A 633-amino-acid polypeptide reads, in one-letter code: Probable potassium transport system protein Kup (633 aa).

Transmembrane regions (helical) follow at residues 21–41, 61–81, 112–132, 149–169, 176–196, 217–237, 258–278, 290–310, 348–368, 377–397, 398–418, and 430–450; these read MLVA…LYTL, ILSL…MMFV, LLVV…MITP, GIDH…FLIQ, IGIL…ALGV, FFMV…LALT, WFLL…ALLL, LLAP…ATVI, IYIG…VIGF, AYGV…SAVM, LLLW…FLLV, and IVQG…LMTT.

Belongs to the HAK/KUP transporter (TC 2.A.72) family.

It localises to the cell inner membrane. It catalyses the reaction K(+)(in) + H(+)(in) = K(+)(out) + H(+)(out). Functionally, transport of potassium into the cell. Likely operates as a K(+):H(+) symporter. The protein is Probable potassium transport system protein Kup of Pseudomonas fluorescens (strain Pf0-1).